The chain runs to 173 residues: Mesencephalic astrocyte-derived neurotrophic factor homolog (173 aa).

An N-terminal signal peptide occupies residues Met1–Ala22. 4 disulfides stabilise this stretch: Cys28/Cys114, Cys31/Cys103, Cys61/Cys72, and Cys148/Cys151.

This sequence belongs to the ARMET family.

It localises to the secreted. In terms of biological role, required during the maturation of the embryonic nervous system for maintenance of neuronal and cuticular connectivity. Essential for maintenance of dopaminergic neurons and dopamine levels. The polypeptide is Mesencephalic astrocyte-derived neurotrophic factor homolog (Drosophila erecta (Fruit fly)).